The following is a 338-amino-acid chain: tRNA N6-adenosine threonylcarbamoyltransferase (338 aa).

His111 and His115 together coordinate Fe cation. Residues 134–138, Asp167, Gly180, and Asn272 contribute to the substrate site; that span reads LVSGG. Asp300 is a binding site for Fe cation.

This sequence belongs to the KAE1 / TsaD family. Fe(2+) is required as a cofactor.

It localises to the cytoplasm. It carries out the reaction L-threonylcarbamoyladenylate + adenosine(37) in tRNA = N(6)-L-threonylcarbamoyladenosine(37) in tRNA + AMP + H(+). In terms of biological role, required for the formation of a threonylcarbamoyl group on adenosine at position 37 (t(6)A37) in tRNAs that read codons beginning with adenine. Is involved in the transfer of the threonylcarbamoyl moiety of threonylcarbamoyl-AMP (TC-AMP) to the N6 group of A37, together with TsaE and TsaB. TsaD likely plays a direct catalytic role in this reaction. The polypeptide is tRNA N6-adenosine threonylcarbamoyltransferase (Shewanella baltica (strain OS155 / ATCC BAA-1091)).